A 275-amino-acid polypeptide reads, in one-letter code: Peptidoglycan-N-acetylglucosamine deacetylase BC_1960 (275 aa).

The 182-residue stretch at 81-262 (AEVALTFDDG…QLKTKGARFV (182 aa)) folds into the NodB homology domain. D88 acts as the Proton acceptor in catalysis. Residues D89, H139, and H143 each coordinate Zn(2+). A 2-hydroxyproline; partial modification is found at P179. H233 functions as the Proton donor in the catalytic mechanism.

The protein belongs to the polysaccharide deacetylase family. Requires Zn(2+) as cofactor. Post-translationally, hydroxylated on Pro-179. Hydroxylation alters the active site and enhances significantly deacetylase activity, probably by creating a more favorable environment for transition-state stabilization. It might be autocatalytic.

It carries out the reaction peptidoglycan-N-acetyl-D-glucosamine + H2O = peptidoglycan-D-glucosamine + acetate.. With respect to regulation, deacetylase activity is stimulated by hydroxylation on Pro-179. Inhibited by CuCl(2) and ZnCl(2). Inhibited by the hydroxamate N-hydroxy-4-(naphthalene-1-yl)benzamide (NHNB). Functionally, catalyzes the deacetylation of N-acetylglucosamine (GlcNAc) residues in peptidoglycan. Also acts on soluble chitin substrates and N-acetylchitooligomers. Acts on cell wall peptidoglycan from the Gram-positive bacteria B.cereus and B.subtilis and the Gram-negative bacterium H.pylori. Not active on acetylated xylan. This Bacillus cereus (strain ATCC 14579 / DSM 31 / CCUG 7414 / JCM 2152 / NBRC 15305 / NCIMB 9373 / NCTC 2599 / NRRL B-3711) protein is Peptidoglycan-N-acetylglucosamine deacetylase BC_1960.